The following is a 199-amino-acid chain: Photosystem I reaction center subunit XI (199 aa).

2 consecutive transmembrane segments (helical) span residues 108–128 (LTAG…LFVL) and 165–185 (FWLG…TLHL).

It belongs to the PsaL family.

The protein localises to the cellular thylakoid membrane. The chain is Photosystem I reaction center subunit XI from Prochlorococcus marinus (strain MIT 9301).